Here is a 142-residue protein sequence, read N- to C-terminus: Hemoglobin subunit alpha-1/2 (142 aa).

Residues 2-142 enclose the Globin domain; sequence VLSADDKTNI…VSTVLTSKYR (141 aa). Ser4 is subject to Phosphoserine. At Lys8 the chain carries N6-succinyllysine. Phosphothreonine is present on Thr9. Residue Lys12 is modified to N6-succinyllysine. At Lys17 the chain carries N6-acetyllysine; alternate. An N6-succinyllysine; alternate modification is found at Lys17. Tyr25 is modified (phosphotyrosine). Lys41 is modified (N6-succinyllysine). At Ser50 the chain carries Phosphoserine. His59 contributes to the O2 binding site. His88 provides a ligand contact to heme b. At Ser103 the chain carries Phosphoserine. Thr109 bears the Phosphothreonine mark. A phosphoserine mark is found at Ser125 and Ser132. 2 positions are modified to phosphothreonine: Thr135 and Thr138. Ser139 carries the phosphoserine modification.

Belongs to the globin family. In terms of assembly, heterotetramer of two alpha chains and two beta chains. In terms of tissue distribution, red blood cells.

Functionally, involved in oxygen transport from the lung to the various peripheral tissues. Its function is as follows. Hemopressin acts as an antagonist peptide of the cannabinoid receptor CNR1. Hemopressin-binding efficiently blocks cannabinoid receptor CNR1 and subsequent signaling. This Rattus norvegicus (Rat) protein is Hemoglobin subunit alpha-1/2 (Hba1).